A 330-amino-acid polypeptide reads, in one-letter code: Phospho-N-acetylmuramoyl-pentapeptide-transferase (330 aa).

9 helical membrane-spanning segments follow: residues 13-33 (VFVF…LIPM), 58-78 (PTMG…FYAG), 83-103 (ILPL…DDFI), 113-133 (LYWN…AVYL), 152-172 (VSLG…STNA), 179-199 (LDGL…IVAM), 209-229 (MFSA…AYPA), 231-250 (IFMG…AIAI), and 304-324 (VKVV…GFFA).

The protein belongs to the glycosyltransferase 4 family. MraY subfamily. Mg(2+) serves as cofactor.

The protein resides in the cell membrane. The catalysed reaction is UDP-N-acetyl-alpha-D-muramoyl-L-alanyl-gamma-D-glutamyl-meso-2,6-diaminopimeloyl-D-alanyl-D-alanine + di-trans,octa-cis-undecaprenyl phosphate = di-trans,octa-cis-undecaprenyl diphospho-N-acetyl-alpha-D-muramoyl-L-alanyl-D-glutamyl-meso-2,6-diaminopimeloyl-D-alanyl-D-alanine + UMP. Its pathway is cell wall biogenesis; peptidoglycan biosynthesis. Its function is as follows. Catalyzes the initial step of the lipid cycle reactions in the biosynthesis of the cell wall peptidoglycan: transfers peptidoglycan precursor phospho-MurNAc-pentapeptide from UDP-MurNAc-pentapeptide onto the lipid carrier undecaprenyl phosphate, yielding undecaprenyl-pyrophosphoryl-MurNAc-pentapeptide, known as lipid I. In Acetivibrio thermocellus (strain ATCC 27405 / DSM 1237 / JCM 9322 / NBRC 103400 / NCIMB 10682 / NRRL B-4536 / VPI 7372) (Clostridium thermocellum), this protein is Phospho-N-acetylmuramoyl-pentapeptide-transferase.